Consider the following 153-residue polypeptide: uncharacterized protein (153 aa).

A signal peptide spans M1–A18. N-linked (GlcNAc...) asparagine glycans are attached at residues N19 and N25. The Extracellular portion of the chain corresponds to N19 to T43. The chain crosses the membrane as a helical span at residues L44 to F64. Over H65–S153 the chain is Cytoplasmic. The disordered stretch occupies residues K75–Q115. Positions E77–H96 are enriched in basic and acidic residues.

The protein resides in the membrane. This is an uncharacterized protein from Xenopus tropicalis (Western clawed frog).